The chain runs to 339 residues: Anthranilate phosphoribosyltransferase (339 aa).

Residues Gly-80, 83-84 (GD), 90-93 (NVST), 108-116 (KHGNRSVTS), and Ser-120 contribute to the 5-phospho-alpha-D-ribose 1-diphosphate site. Gly-80 contributes to the anthranilate binding site. Ser-92 serves as a coordination point for Mg(2+). Anthranilate is bound at residue Asn-111. Arg-166 is a binding site for anthranilate. Positions 225 and 226 each coordinate Mg(2+).

Belongs to the anthranilate phosphoribosyltransferase family. As to quaternary structure, homodimer. Mg(2+) serves as cofactor.

It carries out the reaction N-(5-phospho-beta-D-ribosyl)anthranilate + diphosphate = 5-phospho-alpha-D-ribose 1-diphosphate + anthranilate. The protein operates within amino-acid biosynthesis; L-tryptophan biosynthesis; L-tryptophan from chorismate: step 2/5. Functionally, catalyzes the transfer of the phosphoribosyl group of 5-phosphorylribose-1-pyrophosphate (PRPP) to anthranilate to yield N-(5'-phosphoribosyl)-anthranilate (PRA). In Ignicoccus hospitalis (strain KIN4/I / DSM 18386 / JCM 14125), this protein is Anthranilate phosphoribosyltransferase.